The chain runs to 690 residues: Protein hook (690 aa).

The 117-residue stretch at 6–122 (MEIYESLIRW…RLLQLILGCA (117 aa)) folds into the Calponin-homology (CH) domain. Coiled coils occupy residues 134–515 (QIME…HHAE) and 546–577 (ETTQ…QAAD).

The protein belongs to the hook family. As to quaternary structure, homodimer. Interacts with microtubules via its N-terminus.

The protein localises to the cytoplasm. It is found in the cytoskeleton. Its subcellular location is the endosome. In terms of biological role, involved in endocytic trafficking. Probably acts as a cytoskeletal linker protein that tethers endosome vesicles to the cytoskeleton. The protein is Protein hook of Anopheles gambiae (African malaria mosquito).